Reading from the N-terminus, the 717-residue chain is Glutamate--cysteine ligase (717 aa).

Residues 484–576 (SKTTEQRAAK…TDSDHTDTDD (93 aa)) are disordered. Low complexity-rich tracts occupy residues 492–518 (AKAQ…NGNG) and 551–567 (GTTN…SNGT).

This sequence belongs to the glutamate--cysteine ligase type 3 family.

It carries out the reaction L-cysteine + L-glutamate + ATP = gamma-L-glutamyl-L-cysteine + ADP + phosphate + H(+). The catalysed reaction is (2S)-2-aminobutanoate + L-glutamate + ATP = gamma-L-glutamyl-(2S)-2-aminobutanoate + ADP + phosphate + H(+). It functions in the pathway sulfur metabolism; glutathione biosynthesis; glutathione from L-cysteine and L-glutamate: step 1/2. Catalyzes the ATP-dependent ligation of L-glutamate and L-cysteine and participates in the first and rate-limiting step in glutathione biosynthesis. This chain is Glutamate--cysteine ligase, found in Drosophila melanogaster (Fruit fly).